Here is a 518-residue protein sequence, read N- to C-terminus: Membrane-bound lytic murein transglycosylase F (518 aa).

Residues 1 to 21 (MKKLKINYLFIGILALLLAVA) form the signal peptide. Residues 22–269 (LWPSIPWFGK…RIEEKYLGHG (248 aa)) are non-LT domain. The LT domain stretch occupies residues 270 to 518 (DDFDYVDTRT…SRKGSEEKQN (249 aa)). E314 is a catalytic residue.

In the N-terminal section; belongs to the bacterial solute-binding protein 3 family. This sequence in the C-terminal section; belongs to the transglycosylase Slt family.

It localises to the cell outer membrane. The catalysed reaction is Exolytic cleavage of the (1-&gt;4)-beta-glycosidic linkage between N-acetylmuramic acid (MurNAc) and N-acetylglucosamine (GlcNAc) residues in peptidoglycan, from either the reducing or the non-reducing ends of the peptidoglycan chains, with concomitant formation of a 1,6-anhydrobond in the MurNAc residue.. Its function is as follows. Murein-degrading enzyme that degrades murein glycan strands and insoluble, high-molecular weight murein sacculi, with the concomitant formation of a 1,6-anhydromuramoyl product. Lytic transglycosylases (LTs) play an integral role in the metabolism of the peptidoglycan (PG) sacculus. Their lytic action creates space within the PG sacculus to allow for its expansion as well as for the insertion of various structures such as secretion systems and flagella. The polypeptide is Membrane-bound lytic murein transglycosylase F (Shigella boydii serotype 18 (strain CDC 3083-94 / BS512)).